Consider the following 128-residue polypeptide: 3-aminoacrylate deaminase RutC (128 aa).

It belongs to the RutC family. As to quaternary structure, homotrimer.

It catalyses the reaction (Z)-3-aminoacrylate + H2O + H(+) = 3-oxopropanoate + NH4(+). Functionally, involved in pyrimidine catabolism. Catalyzes the deamination of 3-aminoacrylate to malonic semialdehyde, a reaction that can also occur spontaneously. RutC may facilitate the reaction and modulate the metabolic fitness, rather than catalyzing essential functions. The sequence is that of 3-aminoacrylate deaminase RutC from Escherichia coli O103:H2 (strain 12009 / EHEC).